Reading from the N-terminus, the 62-residue chain is Bowman-Birk type proteinase inhibitor B7 (62 aa).

Intrachain disulfides connect cysteine 5–cysteine 59, cysteine 6–cysteine 23, cysteine 13–cysteine 21, cysteine 30–cysteine 37, and cysteine 34–cysteine 51.

The protein belongs to the Bowman-Birk serine protease inhibitor family. Expressed in bulb (at protein level).

In terms of biological role, serine protease inhibitor. Inhibits trypsin (Ki = 65 nM) and weakly inhibits chymotrypsin (Ki = 295 nM). Does not inhibit bacterial subtilisin. This chain is Bowman-Birk type proteinase inhibitor B7, found in Hyacinthus orientalis (Common hyacinth).